We begin with the raw amino-acid sequence, 236 residues long: Small ribosomal subunit protein uS2c (236 aa).

This sequence belongs to the universal ribosomal protein uS2 family.

Its subcellular location is the plastid. The protein resides in the chloroplast. In Ipomoea purpurea (Common morning glory), this protein is Small ribosomal subunit protein uS2c (rps2).